A 220-amino-acid polypeptide reads, in one-letter code: Superoxide dismutase [Cu-Zn], chloroplastic (220 aa).

The transit peptide at 1-66 directs the protein to the chloroplast; sequence MAAHCILFSS…AAPKPLTVFA (66 aa). Positions 112, 114, and 129 each coordinate Cu cation. A disulfide bridge links cysteine 123 with cysteine 212. Positions 129, 137, 146, and 149 each coordinate Zn(2+). Histidine 186 lines the Cu cation pocket.

It belongs to the Cu-Zn superoxide dismutase family. As to quaternary structure, homotetramer. The cofactor is Cu cation. Requires Zn(2+) as cofactor.

The protein localises to the plastid. The protein resides in the chloroplast. It carries out the reaction 2 superoxide + 2 H(+) = H2O2 + O2. Destroys radicals which are normally produced within the cells and which are toxic to biological systems. The chain is Superoxide dismutase [Cu-Zn], chloroplastic (SODCP) from Solidago canadensis var. scabra (Tall goldenrod).